The primary structure comprises 278 residues: Bicarbonate transport ATP-binding protein CmpD (278 aa).

Residues 21–254 form the ABC transporter domain; the sequence is LIVENVSKIY…RPRDRERIME (234 aa). ATP is bound at residue 57–64; the sequence is GHSGCGKS.

This sequence belongs to the ABC transporter superfamily. Nitrate/nitrite/cyanate uptake transporter (NitT) (TC 3.A.1.16) family. As to quaternary structure, the complex is composed of two ATP-binding proteins (CmpC and CmpD), a transmembrane protein (CmpB) and a solute-binding protein (CmpA).

It is found in the cell inner membrane. Part of the ABC transporter complex CmpABCD involved in bicarbonate transport. Responsible for energy coupling to the transport system. In Synechococcus elongatus (strain ATCC 33912 / PCC 7942 / FACHB-805) (Anacystis nidulans R2), this protein is Bicarbonate transport ATP-binding protein CmpD (cmpD).